Consider the following 193-residue polypeptide: Segregation and condensation protein B (193 aa).

This sequence belongs to the ScpB family. As to quaternary structure, homodimer. Homodimerization may be required to stabilize the binding of ScpA to the Smc head domains. Component of a cohesin-like complex composed of ScpA, ScpB and the Smc homodimer, in which ScpA and ScpB bind to the head domain of Smc. The presence of the three proteins is required for the association of the complex with DNA.

It is found in the cytoplasm. In terms of biological role, participates in chromosomal partition during cell division. May act via the formation of a condensin-like complex containing Smc and ScpA that pull DNA away from mid-cell into both cell halves. This chain is Segregation and condensation protein B, found in Clostridium botulinum (strain ATCC 19397 / Type A).